A 290-amino-acid chain; its full sequence is Nitrogenase iron protein 2 (290 aa).

10–17 provides a ligand contact to ATP; that stretch reads GKGGIGKS. [4Fe-4S] cluster is bound at residue Cys-98. Arg-101 is subject to ADP-ribosylarginine; by dinitrogenase reductase ADP-ribosyltransferase. Residue Cys-133 coordinates [4Fe-4S] cluster.

The protein belongs to the NifH/BchL/ChlL family. In terms of assembly, homodimer. Requires [4Fe-4S] cluster as cofactor. Post-translationally, the reversible ADP-ribosylation of Arg-101 inactivates the nitrogenase reductase and regulates nitrogenase activity.

It catalyses the reaction N2 + 8 reduced [2Fe-2S]-[ferredoxin] + 16 ATP + 16 H2O = H2 + 8 oxidized [2Fe-2S]-[ferredoxin] + 2 NH4(+) + 16 ADP + 16 phosphate + 6 H(+). In terms of biological role, the key enzymatic reactions in nitrogen fixation are catalyzed by the nitrogenase complex, which has 2 components: the iron protein (component 2) and a component 1 which is either a molybdenum-iron protein, a vanadium-iron, or an iron-iron protein. This Azotobacter vinelandii protein is Nitrogenase iron protein 2 (vnfH).